We begin with the raw amino-acid sequence, 516 residues long: Glucose-6-phosphate 1-dehydrogenase 5, cytoplasmic (516 aa).

Residues 38-45 (GASGDLAK), Arg-73, Tyr-156, and Lys-183 contribute to the NADP(+) site. D-glucose 6-phosphate is bound by residues Lys-183, 213 to 217 (HYLGK), Glu-251, and Asp-270. His-275 acts as the Proton acceptor in catalysis. NADP(+) is bound at residue Lys-358. Positions 361 and 366 each coordinate D-glucose 6-phosphate. Positions 367, 371, and 395 each coordinate NADP(+). Gln-397 contributes to the D-glucose 6-phosphate binding site. NADP(+) is bound by residues 403–405 (YMK), 423–425 (DLS), Arg-489, and Trp-511.

The protein belongs to the glucose-6-phosphate dehydrogenase family. Forms homodimer. Expressed in leaves and stems.

The protein resides in the cytoplasm. The protein localises to the cytosol. The catalysed reaction is D-glucose 6-phosphate + NADP(+) = 6-phospho-D-glucono-1,5-lactone + NADPH + H(+). The protein operates within carbohydrate degradation; pentose phosphate pathway; D-ribulose 5-phosphate from D-glucose 6-phosphate (oxidative stage): step 1/3. With respect to regulation, regulated by metabolites. In terms of biological role, catalyzes the rate-limiting step of the oxidative pentose-phosphate pathway, which represents a route for the dissimilation of carbohydrates besides glycolysis. The main function of this enzyme is to provide reducing power (NADPH) and pentose phosphates for fatty acid and nucleic acid synthesis which are involved in membrane synthesis and cell division. The chain is Glucose-6-phosphate 1-dehydrogenase 5, cytoplasmic from Arabidopsis thaliana (Mouse-ear cress).